A 257-amino-acid polypeptide reads, in one-letter code: MASKTGSRRWMLQLIMQLGSVLLTRCPFWGCFSQLMLYAERAEARRKPDIPVPYLYFDMGAAVLCASFMSFGVKRRWFALGAALQLAISTYAAYVGGYVHYGDWLKVRMYSRTVAIIGGFLVLASGAGELYRRKPRSRSLQSTGQVFLGVYLVCVAYSLQHSKEDRLAYLNHLPGGELMVQLFFVLYGVLALAFLSGYYVTLAAQILAVLLPPVMLLIDGNVAYWHNTRRVEFWNQMKLLGESVGIFGAAVILATDG.

The next 8 helical transmembrane spans lie at 21 to 40 (VLLT…LYAE), 52 to 72 (VPYL…MSFG), 77 to 97 (WFAL…YVGG), 110 to 130 (YSRT…AGEL), 139 to 159 (SLQS…AYSL), 182 to 202 (LFFV…YVTL), 206 to 226 (ILAV…AYWH), and 233 to 253 (FWNQ…AVIL).

It localises to the membrane. In terms of biological role, may activate NF-kappa-B signaling pathways. This chain is Transmembrane protein 101 (TMEM101), found in Bos taurus (Bovine).